Reading from the N-terminus, the 492-residue chain is Beta-Ala-His dipeptidase (492 aa).

His-107 serves as a coordination point for Zn(2+). Asp-109 is an active-site residue. Asp-140 contacts Zn(2+). Residue Glu-174 is the Proton acceptor of the active site. Glu-175 contacts Zn(2+). A Phosphoserine modification is found at Ser-194. Asp-203 and His-453 together coordinate Zn(2+).

This sequence belongs to the peptidase M20A family. As to quaternary structure, homodimer. It depends on Zn(2+) as a cofactor. Detected exclusively in kidney.

Its subcellular location is the secreted. It carries out the reaction Preferential hydrolysis of the beta-Ala-|-His dipeptide (carnosine), and also anserine, Xaa-|-His dipeptides and other dipeptides including homocarnosine.. The enzyme catalyses carnosine + H2O = beta-alanine + L-histidine. It catalyses the reaction anserine + H2O = N(pros)-methyl-L-histidine + beta-alanine. The catalysed reaction is L-alanyl-L-histidine + H2O = L-histidine + L-alanine. It carries out the reaction glycyl-L-histidine + H2O = L-histidine + glycine. The enzyme catalyses L-homocarnosine + H2O = 4-aminobutanoate + L-histidine. In terms of biological role, catalyzes the peptide bond hydrolysis in Xaa-His dipeptides, displaying the highest activity toward carnosine (beta-alanyl-L-histidine) and anserine (beta-alanyl-3-methyl-histidine). The sequence is that of Beta-Ala-His dipeptidase (Cndp1) from Rattus norvegicus (Rat).